We begin with the raw amino-acid sequence, 512 residues long: ATP synthase subunit alpha (512 aa).

170–177 serves as a coordination point for ATP; that stretch reads GDRQTGKT.

This sequence belongs to the ATPase alpha/beta chains family. F-type ATPases have 2 components, CF(1) - the catalytic core - and CF(0) - the membrane proton channel. CF(1) has five subunits: alpha(3), beta(3), gamma(1), delta(1), epsilon(1). CF(0) has three main subunits: a(1), b(2) and c(9-12). The alpha and beta chains form an alternating ring which encloses part of the gamma chain. CF(1) is attached to CF(0) by a central stalk formed by the gamma and epsilon chains, while a peripheral stalk is formed by the delta and b chains.

It is found in the cell inner membrane. The catalysed reaction is ATP + H2O + 4 H(+)(in) = ADP + phosphate + 5 H(+)(out). Produces ATP from ADP in the presence of a proton gradient across the membrane. The alpha chain is a regulatory subunit. This is ATP synthase subunit alpha from Solibacter usitatus (strain Ellin6076).